Here is a 124-residue protein sequence, read N- to C-terminus: Ribonuclease pancreatic (124 aa).

Residues 1–15 (KESPAKKFQRQHMDP) are compositionally biased toward basic and acidic residues. The tract at residues 1 to 24 (KESPAKKFQRQHMDPDSSSSNSSN) is disordered. Substrate contacts are provided by K7 and R10. The active-site Proton acceptor is H12. 2 N-linked (GlcNAc...) asparagine glycosylation sites follow: N21 and N34. 4 disulfide bridges follow: C26/C84, C40/C95, C58/C110, and C65/C72. Substrate contacts are provided by residues 41–45 (KPVNT) and K66. N-linked (GlcNAc...) asparagine glycosylation occurs at N76. A substrate-binding site is contributed by R85. The Proton donor role is filled by H119.

This sequence belongs to the pancreatic ribonuclease family. As to quaternary structure, monomer. Interacts with and forms tight 1:1 complexes with RNH1. Dimerization of two such complexes may occur. Interaction with RNH1 inhibits this protein. In terms of tissue distribution, pancreas.

It is found in the secreted. It catalyses the reaction an [RNA] containing cytidine + H2O = an [RNA]-3'-cytidine-3'-phosphate + a 5'-hydroxy-ribonucleotide-3'-[RNA].. It carries out the reaction an [RNA] containing uridine + H2O = an [RNA]-3'-uridine-3'-phosphate + a 5'-hydroxy-ribonucleotide-3'-[RNA].. In terms of biological role, endonuclease that catalyzes the cleavage of RNA on the 3' side of pyrimidine nucleotides. Acts on single-stranded and double-stranded RNA. The chain is Ribonuclease pancreatic (RNASE1) from Sus scrofa (Pig).